The following is a 1025-amino-acid chain: Multidrug resistance protein MdtC (1025 aa).

The next 12 membrane-spanning stretches (helical) occupy residues 3–23 (FFALFIYRPVATILLSVAITL), 333–353 (EVEQTLIISVALVILVVFLFL), 360–380 (IIPAVAVPVSLIGTFAAMYLC), 387–407 (LSLMALTIATGFVVDDAIVVL), 431–451 (VGFTVLSMSLSLVAVFLPLLL), 463–483 (FAVTLSVAIGISLLVSLTLTP), 528–548 (LVGVVLLGTIALNIWLYISIP), 853–873 (VILIIAAIATVYIVLGILYES), 875–895 (VHPLTILSTLPSAGVGALLAL), 897–917 (LFNAPFSLIALIGIMLLIGIV), 953–973 (PIMMTTLAALFGALPLVLSGG), and 984–1004 (ITIVGGLVMSQLLTLYTTPVV).

This sequence belongs to the resistance-nodulation-cell division (RND) (TC 2.A.6) family. MdtC subfamily. In terms of assembly, part of a tripartite efflux system composed of MdtA, MdtB and MdtC. MdtC forms a heteromultimer with MdtB.

It localises to the cell inner membrane. The MdtABC tripartite complex confers resistance against novobiocin and deoxycholate. This Escherichia coli (strain 55989 / EAEC) protein is Multidrug resistance protein MdtC.